The chain runs to 276 residues: Chymotrypsin (276 aa).

A signal peptide spans 1 to 16; it reads MKVALVVLALFGVSLA. Residues 17–45 constitute a propeptide, activation peptide; it reads ASIDNIEIPPSKNIYVEPINQPEVDPSLE. One can recognise a Peptidase S1 domain in the interval 46–272; the sequence is IVNGQEVVPH…YLNWLQTHSE (227 aa). A disulfide bridge connects residues Cys-74 and Cys-90. Residues His-89 and Asp-135 each act as charge relay system in the active site. N-linked (GlcNAc...) asparagine glycosylation is found at Asn-144 and Asn-193. 2 cysteine pairs are disulfide-bonded: Cys-202–Cys-215 and Cys-225–Cys-250. The Charge relay system role is filled by Ser-229.

The protein belongs to the peptidase S1 family. As to expression, expressed in larval carcasses and gut, and adult gut.

It localises to the secreted. The protein localises to the extracellular space. It carries out the reaction Preferential cleavage: Tyr-|-Xaa, Trp-|-Xaa, Phe-|-Xaa, Leu-|-Xaa.. Functionally, serine protease with chymotryptic and collagenolytic activities. This Phaedon cochleariae (Mustard beetle) protein is Chymotrypsin.